A 537-amino-acid chain; its full sequence is MSGQQRGSVILVPEHLAGALTKLMSDFITGQDVTLSGGNIAVKIRDAINQTPGGGDVAILSSLFALWNALPTSGRQSSRDDLIPAAVQALTTAHNLCLGVIPGETSHKDTPESLLRAIVTGLQKLWVDSCGCPECLQCLKGLKAIKPGLYEIPRIIPHTKQCSPVNLLNMLVHKLVALRGHVQLAYDARVLTPDFHEIPDLDDSDAVFARTLLAALFHLNMFFILKDYITQDSMSLKQALSGHWMSATGNPLPAAPETLRNYLEAFRNSDNHFYLPTTGPLNTFKFPEELLGRVVVIDSSLCAASHVQDVITRGVGAGVPRPRFLALPPAPSREPQQTCSQLTSRGNESSRRNLGQPGGTSPAVPPVCPIVSLAASRAKQNRGGTGSLHLAQPEGTSPAVSPVCPIASPAASRSKQHCGVTGSSQAAPSSSSVTPVASLSGDLEEEEEGSRESPSPPSSKKGAEEFEAWLEAQDANLEDVQREFSGLRVIGDEDEDGSEDGEFSDLDLSDSDHEGDEGGGAVGGGRSLHSLYSLSVV.

Disordered stretches follow at residues 322–466 (PRFL…AEEF) and 486–537 (GLRV…LSVV). Over residues 334–347 (EPQQTCSQLTSRGN) the composition is skewed to polar residues. Positions 420-441 (VTGSSQAAPSSSSVTPVASLSG) are enriched in low complexity. The span at 492–517 (DEDEDGSEDGEFSDLDLSDSDHEGDE) shows a compositional bias: acidic residues.

It belongs to the lymphocryptovirus BRRF2 family.

The protein resides in the virion tegument. The chain is Tegument protein BRRF2 from Homo sapiens (Human).